Reading from the N-terminus, the 328-residue chain is Anthranilate phosphoribosyltransferase (328 aa).

5-phospho-alpha-D-ribose 1-diphosphate-binding positions include glycine 79, 82–83 (GD), threonine 87, 89–92 (NIST), 107–115 (KHGNYAVSS), and serine 119. Glycine 79 lines the anthranilate pocket. Position 91 (serine 91) interacts with Mg(2+). Asparagine 110 is an anthranilate binding site. Anthranilate is bound at residue arginine 165. Aspartate 223 and glutamate 224 together coordinate Mg(2+).

The protein belongs to the anthranilate phosphoribosyltransferase family. Homodimer. Mg(2+) is required as a cofactor.

The catalysed reaction is N-(5-phospho-beta-D-ribosyl)anthranilate + diphosphate = 5-phospho-alpha-D-ribose 1-diphosphate + anthranilate. It participates in amino-acid biosynthesis; L-tryptophan biosynthesis; L-tryptophan from chorismate: step 2/5. Its function is as follows. Catalyzes the transfer of the phosphoribosyl group of 5-phosphorylribose-1-pyrophosphate (PRPP) to anthranilate to yield N-(5'-phosphoribosyl)-anthranilate (PRA). This is Anthranilate phosphoribosyltransferase from Cytophaga hutchinsonii (strain ATCC 33406 / DSM 1761 / CIP 103989 / NBRC 15051 / NCIMB 9469 / D465).